A 477-amino-acid polypeptide reads, in one-letter code: UDP-N-acetylmuramate--L-alanine ligase (477 aa).

An ATP-binding site is contributed by 112-118; it reads GTHGKTT.

Belongs to the MurCDEF family.

The protein localises to the cytoplasm. It carries out the reaction UDP-N-acetyl-alpha-D-muramate + L-alanine + ATP = UDP-N-acetyl-alpha-D-muramoyl-L-alanine + ADP + phosphate + H(+). It participates in cell wall biogenesis; peptidoglycan biosynthesis. Cell wall formation. This chain is UDP-N-acetylmuramate--L-alanine ligase, found in Cupriavidus necator (strain ATCC 17699 / DSM 428 / KCTC 22496 / NCIMB 10442 / H16 / Stanier 337) (Ralstonia eutropha).